A 93-amino-acid chain; its full sequence is Large ribosomal subunit protein uL23 (93 aa).

It belongs to the universal ribosomal protein uL23 family. In terms of assembly, part of the 50S ribosomal subunit. Contacts protein L29, and trigger factor when it is bound to the ribosome.

Functionally, one of the early assembly proteins it binds 23S rRNA. One of the proteins that surrounds the polypeptide exit tunnel on the outside of the ribosome. Forms the main docking site for trigger factor binding to the ribosome. The protein is Large ribosomal subunit protein uL23 of Opitutus terrae (strain DSM 11246 / JCM 15787 / PB90-1).